The chain runs to 89 residues: Ubiquinol-cytochrome-c reductase complex assembly factor 3 (89 aa).

The Mitochondrial matrix portion of the chain corresponds to 1 to 7 (MEAARKA). A helical membrane pass occupies residues 8–28 (LAVVAVLGAGGGVGSILFALV). Residues 23 to 80 (ILFALVTPGELQKQLMLQEMPERDSRRRDEAVRTKELVMATLKDAAATKENVAWRRNW) form a mediates lipid-binding region. Topologically, residues 29–89 (TPGELQKQLM…WTVRGDGRSA (61 aa)) are mitochondrial intermembrane.

Belongs to the UQCC3 family. In terms of assembly, associates with the ubiquinol-cytochrome c reductase complex (mitochondrial respiratory chain complex III(CIII) or cytochrome b-c1 complex). Interacts with UQCC1. Forms a complex, named COMC, composed of UQCC1, UQCC2; UQCC3 and UQCC4; mediates MT-CYB hemylation and association with the first nuclear-encoded complex III subunit UQCRQ. Probably cleaved by OMA1 under mitochondrial stress conditions.

It is found in the mitochondrion inner membrane. In terms of biological role, required for the assembly of the ubiquinol-cytochrome c reductase complex (mitochondrial respiratory chain complex III or cytochrome b-c1 complex), mediating cytochrome b recruitment and probably stabilization within the complex. Thereby, plays an important role in ATP production by mitochondria. Cardiolipin-binding protein, it may also control the cardiolipin composition of mitochondria membranes and their morphology. In Rattus norvegicus (Rat), this protein is Ubiquinol-cytochrome-c reductase complex assembly factor 3.